The chain runs to 148 residues: Receptor activity-modifying protein 1 (148 aa).

An N-terminal signal peptide occupies residues 1–26 (MARALCRLPRRGLWLLLAHHLFMTTA). 3 disulfides stabilise this stretch: Cys-27-Cys-82, Cys-40-Cys-72, and Cys-57-Cys-104. The Extracellular segment spans residues 27 to 118 (CQEANYGALL…RAVRDPPGSI (92 aa)). A helical membrane pass occupies residues 119–140 (LYPFIVVPITVTLLVTALVVWQ). Residues 141-148 (SKRTEGIV) are Cytoplasmic-facing.

It belongs to the RAMP family. In terms of assembly, heterodimer of CALCRL and RAMP1; the interaction induces allosteric modulation of CALCRL function and CGRP1/CALCA and CGRP2/CALCB ligand specificity. Heterodimer of CALCR and RAMP1; interaction forms the AMYR1 receptor complex for amylin/IAPP and CGRP1/CALCA ligands. As to expression, expressed in many tissues including the uterus, bladder, brain, pancreas and gastro-intestinal tract.

The protein resides in the cell membrane. In terms of biological role, accessory protein that interacts with and modulates the function of G-protein coupled receptors including calcitonin gene-related peptide type 1 receptor (CALCRL) and calcitonin receptor (CALCR). Required for the transport of CALCRL to the plasma membrane. Together with CALCRL, form the receptor complex for the calcitonin gene-related peptides CGRP1/CALCA and CGRP2/CALCB. Together with CALCR, form the AMYR1 receptor complex for amylin/IAPP and CGRP1/CALCA. The chain is Receptor activity-modifying protein 1 from Homo sapiens (Human).